The following is a 47-amino-acid chain: MAFEEAMNRVFHKKICLRCTARNPWKATKCRKCGYTKLRPKAKESRG.

It belongs to the eukaryotic ribosomal protein eL40 family.

This chain is Large ribosomal subunit protein eL40, found in Methanococcus aeolicus (strain ATCC BAA-1280 / DSM 17508 / OCM 812 / Nankai-3).